Here is a 348-residue protein sequence, read N- to C-terminus: MSFIHKLIQKFKPKKKLVDQVQQAVQEKSFFQANQKSYYQGLNKSANSFANTINKLAANYVTVNEQFQESLFEELVLLDIGYHAATKICDAIVQELKLQRVSDPQLIQEIIVDKLIVYYIQDKLFETDLTVEANKTNVYLFVGVNGVGKTTSLAKLADQLTKQNKRVLMVAGDTFRAGAVAQLAEWAQRIGCDIVLPNPKEETPAVIFRGVQQGIQNEYDFVLCDTSGRLQNKTNLMNELKKIYQIVQKVSSAKPQETLLVLDGTTGQSGLAQAKVFNEFTELTGIILTKMDSSSKGGIILAIKDLFNLPVKLIGFGETTADLAAFDLEQYVLGLTKNLSLNHEPNQT.

Residues 143–150, 225–229, and 289–292 contribute to the GTP site; these read GVNGVGKT, DTSGR, and TKMD.

The protein belongs to the GTP-binding SRP family. FtsY subfamily. As to quaternary structure, part of the signal recognition particle protein translocation system, which is composed of SRP and FtsY.

It is found in the cell membrane. The protein resides in the cytoplasm. It carries out the reaction GTP + H2O = GDP + phosphate + H(+). In terms of biological role, involved in targeting and insertion of nascent membrane proteins into the cytoplasmic membrane. Acts as a receptor for the complex formed by the signal recognition particle (SRP) and the ribosome-nascent chain (RNC). This is Signal recognition particle receptor FtsY from Mycoplasma pneumoniae (strain ATCC 29342 / M129 / Subtype 1) (Mycoplasmoides pneumoniae).